The following is a 147-amino-acid chain: 3-hydroxyacyl-[acyl-carrier-protein] dehydratase FabZ (147 aa).

Residue His-48 is part of the active site.

Belongs to the thioester dehydratase family. FabZ subfamily.

Its subcellular location is the cytoplasm. It catalyses the reaction a (3R)-hydroxyacyl-[ACP] = a (2E)-enoyl-[ACP] + H2O. In terms of biological role, involved in unsaturated fatty acids biosynthesis. Catalyzes the dehydration of short chain beta-hydroxyacyl-ACPs and long chain saturated and unsaturated beta-hydroxyacyl-ACPs. The polypeptide is 3-hydroxyacyl-[acyl-carrier-protein] dehydratase FabZ (Aliarcobacter butzleri (strain RM4018) (Arcobacter butzleri)).